We begin with the raw amino-acid sequence, 180 residues long: Protein YOP1 (180 aa).

Topologically, residues 1 to 35 (MADYLKLFQDSLKGLDTKFAGNQILSRIEAQTKLP) are cytoplasmic. Residues 36 to 55 (RSYVIVGLVAVYFLLIFINV) form a helical membrane-spanning segment. Topologically, residues 56–57 (GG) are lumenal. The chain crosses the membrane as a helical span at residues 58-78 (IGEILSNFVGFCIPTYYSLKA). Residues 79-88 (LKTATSTDDT) lie on the Cytoplasmic side of the membrane. A helical membrane pass occupies residues 89–105 (QLLTYWIVFSFLSVIEF). Residues 106 to 108 (WSK) are Lumenal-facing. A helical transmembrane segment spans residues 109–127 (AILYWVPFYWFFKTVFLLY). At 128 to 180 (IAIPSFGGAQLVYTRLISPFSDKYLPIVEGKSGELAQKVEAAANNAKASGYSR) the chain is on the cytoplasmic side.

Belongs to the DP1 family. In terms of assembly, oligomer.

The protein resides in the endoplasmic reticulum membrane. It localises to the golgi apparatus membrane. Required to generate and maintain the structure of the tubular endoplasmic reticulum network and the vacuole. Induces high curvature in membranes and causes membrane tubule formation. Involved in membrane/vesicle trafficking. This chain is Protein YOP1 (YOP1), found in Kluyveromyces lactis (strain ATCC 8585 / CBS 2359 / DSM 70799 / NBRC 1267 / NRRL Y-1140 / WM37) (Yeast).